The chain runs to 76 residues: MKLTILFLVAAVLMSTQALIQHDGEKSQKAKMKFLTARTLSAKTRGVDCVGLSSYCGPWNNPPCCSWYTCDYYCKF.

A signal peptide spans 1–18; it reads MKLTILFLVAAVLMSTQA. Residues 19-45 constitute a propeptide that is removed on maturation; that stretch reads LIQHDGEKSQKAKMKFLTARTLSAKTR. Cystine bridges form between cysteine 49-cysteine 65, cysteine 56-cysteine 70, and cysteine 64-cysteine 74.

This sequence belongs to the conotoxin O2 superfamily. Expressed by the venom duct.

Its subcellular location is the secreted. In Conus ventricosus (Mediterranean cone), this protein is Conotoxin VnMEKL-0111.